Consider the following 625-residue polypeptide: Glucokinase regulatory protein (625 aa).

2 SIS domains span residues 90–286 (VQEV…QGIA) and 320–499 (VSTS…LLGK). Residues 109–110 (TS), Glu153, and 179–181 (SVG) contribute to the beta-D-fructose 1-phosphate site. Residue 109-110 (TS) participates in beta-D-fructose 6-phosphate binding. A beta-D-fructose 6-phosphate-binding site is contributed by 179–181 (SVG). An important for interaction with GCK region spans residues 199–200 (AV). Position 348 (Glu348) interacts with beta-D-fructose 1-phosphate. Residues 463-465 (LLF) are essential for interaction with GCK. Lys514 is a binding site for beta-D-fructose 1-phosphate. Lys514 provides a ligand contact to beta-D-fructose 6-phosphate.

This sequence belongs to the GCKR family. Interacts (fructose 6-phosphate bound form) with GCK. In terms of tissue distribution, found in liver and pancreas. Not detected in muscle, brain, heart, thymus, intestine, uterus, adipose tissue, kidney, adrenal, lung or spleen.

It is found in the cytoplasm. The protein resides in the nucleus. The protein localises to the mitochondrion. Functionally, regulates glucokinase (GCK) by forming an inactive complex with this enzyme. Acts by promoting GCK recruitment to the nucleus, possibly to provide a reserve of GCK that can be quickly released in the cytoplasm after a meal. The affinity of GCKR for GCK is modulated by fructose metabolites: GCKR with bound fructose 6-phosphate has increased affinity for GCK, while GCKR with bound fructose 1-phosphate has strongly decreased affinity for GCK and does not inhibit GCK activity. This chain is Glucokinase regulatory protein, found in Homo sapiens (Human).